Consider the following 946-residue polypeptide: ATP-dependent 6-phosphofructokinase subunit beta (946 aa).

Residues 1–559 (MISIVNGTST…HLANFMAMNT (559 aa)) form an N-terminal catalytic PFK domain 1 region. ATP is bound by residues Gly-192, 256–257 (RC), and 286–289 (GDGS). Asp-287 contributes to the Mg(2+) binding site. Beta-D-fructose 6-phosphate contacts are provided by residues 332–334 (SID), Arg-369, 376–378 (MGR), Glu-433, Arg-461, and 467–470 (HVQR). Asp-334 (proton acceptor) is an active-site residue. Residues 560–573 (ANHEKPTLPREKRK) form an interdomain linker region. The segment at 574–946 (KIAIINIGAP…LVGRTRLDKP (373 aa)) is C-terminal regulatory PFK domain 2. Beta-D-fructose 2,6-bisphosphate contacts are provided by residues Arg-644, 702-706 (TISNN), 747-749 (QGG), Lys-833, 839-842 (HVQQ), and Arg-920.

It belongs to the phosphofructokinase type A (PFKA) family. ATP-dependent PFK group I subfamily. Eukaryotic two domain clade 'E' sub-subfamily. As to quaternary structure, heterooctamer of 4 alpha and 4 beta chains. Requires Mg(2+) as cofactor.

The protein resides in the cytoplasm. The enzyme catalyses beta-D-fructose 6-phosphate + ATP = beta-D-fructose 1,6-bisphosphate + ADP + H(+). It functions in the pathway carbohydrate degradation; glycolysis; D-glyceraldehyde 3-phosphate and glycerone phosphate from D-glucose: step 3/4. With respect to regulation, allosterically activated by ADP, AMP, or fructose 2,6-bisphosphate, and allosterically inhibited by ATP or citrate. In terms of biological role, catalyzes the phosphorylation of D-fructose 6-phosphate to fructose 1,6-bisphosphate by ATP, the first committing step of glycolysis. This chain is ATP-dependent 6-phosphofructokinase subunit beta (PFK2), found in Candida albicans (Yeast).